Reading from the N-terminus, the 465-residue chain is Sodium-dependent phosphate transport protein 1 (465 aa).

N-linked (GlcNAc...) asparagine glycans are attached at residues Asn-39, Asn-47, and Asn-56. A run of 10 helical transmembrane segments spans residues 79-99, 117-137, 176-196, 199-219, 260-280, 304-324, 337-356, 363-383, 399-419, and 429-449; these read GLIL…VGYL, SLMS…VIVC, FVMG…LLGW, VFYI…FLFF, LPLW…SLLV, LPYL…DFFL, LFTT…LLYL, TVIF…GQLI, VTAL…GLIL, and KIFF…FLFA.

It belongs to the major facilitator superfamily. Sodium/anion cotransporter family. As to quaternary structure, interacts with PDZK1. In terms of tissue distribution, kidney.

It is found in the apical cell membrane. It catalyses the reaction 3 Na(+)(out) + phosphate(out) = 3 Na(+)(in) + phosphate(in). It carries out the reaction urate(out) = urate(in). Important for the resorption of phosphate by the kidney. May be involved in actively transporting phosphate into cells via Na(+) cotransport in the renal brush border membrane. Plays a role in urate transport in the kidney. This is Sodium-dependent phosphate transport protein 1 (Slc17a1) from Mus musculus (Mouse).